We begin with the raw amino-acid sequence, 668 residues long: Probable potassium transport system protein Kup (668 aa).

12 helical membrane passes run 17–37 (GILV…LYVM), 59–79 (VSLI…VIAL), 104–124 (IIPA…TPAV), 148–168 (TIIV…QRFG), 175–195 (AFGP…LMNF), 221–241 (LGLF…ALYS), 256–276 (PYIK…LLTV), 299–319 (ILVF…QALI), 350–370 (MYIP…VLAF), 380–400 (YGLS…FYLL), 403–423 (IPAW…VVFF), and 430–450 (FFHG…IMII).

The protein belongs to the HAK/KUP transporter (TC 2.A.72) family.

Its subcellular location is the cell membrane. It catalyses the reaction K(+)(in) + H(+)(in) = K(+)(out) + H(+)(out). Its function is as follows. Transport of potassium into the cell. Likely operates as a K(+):H(+) symporter. In Enterococcus faecalis (strain ATCC 700802 / V583), this protein is Probable potassium transport system protein Kup.